The sequence spans 149 residues: Large ribosomal subunit protein bL9 (149 aa).

It belongs to the bacterial ribosomal protein bL9 family.

Functionally, binds to the 23S rRNA. The chain is Large ribosomal subunit protein bL9 from Cutibacterium acnes (strain DSM 16379 / KPA171202) (Propionibacterium acnes).